The sequence spans 241 residues: Cobalt transport protein CbiM (241 aa).

The signal sequence occupies residues 1–24 (MKKIKIISFSVAYLILLTPIYASA). 6 helical membrane-spanning segments follow: residues 30–50 (GFLPPLWAAIWSVISLPFIVG), 67–87 (LLLGLVGAFVFVLSALKLPSV), 99–119 (LGTIIFGPLPMAVIGLIVLIF), 131–151 (TLGANVFSMAIVGPFAGYFIF), 160–180 (SLAVFLAAMLADLITYIVTSL), and 202–222 (GIFAITQIPLAIGEGILTLIV).

This sequence belongs to the CbiM family. Forms an energy-coupling factor (ECF) transporter complex composed of an ATP-binding protein (A component, CbiO), a transmembrane protein (T component, CbiQ) and 2 possible substrate-capture proteins (S components, CbiM and CbiN) of unknown stoichimetry.

The protein resides in the cell membrane. It functions in the pathway cofactor biosynthesis; adenosylcobalamin biosynthesis. In terms of biological role, part of the energy-coupling factor (ECF) transporter complex CbiMNOQ involved in cobalt import. In Acetoanaerobium sticklandii (strain ATCC 12662 / DSM 519 / JCM 1433 / CCUG 9281 / NCIMB 10654 / HF) (Clostridium sticklandii), this protein is Cobalt transport protein CbiM.